Here is a 410-residue protein sequence, read N- to C-terminus: Putative transporter AmpG 1 (410 aa).

Transmembrane regions (helical) follow at residues 5 to 25, 40 to 60, 76 to 96, 98 to 118, 141 to 161, 169 to 189, 217 to 237, 265 to 285, 290 to 310, 320 to 340, 356 to 378, and 383 to 402; these read LSIIWLFGLISGFNIMITGNT, IGLLSLITLPYSINFLFAPIF, LSWICLTSIALVFFVYILSFL, PFDNLLLFASISLIISFFSSM, GIYIFGYRFGMLLANSGAIYL, EIYKIFAILIFIYLILLIVGV, ILKPIGSISFIILILIFLILY, VGKFWGVMGAIVGGLLGGFIM, ILDSILLFGIIHALAHILFII, LLFITIGAESITGGMTMTAYI, YSFFSSMMGISRSIFPIISGYIV, and WQNFFLFTTIITIPSLLVLL.

Belongs to the major facilitator superfamily.

It localises to the cell inner membrane. The polypeptide is Putative transporter AmpG 1 (ampG1) (Rickettsia bellii (strain RML369-C)).